Here is a 426-residue protein sequence, read N- to C-terminus: Serine--tRNA ligase (426 aa).

The tract at residues 44 to 67 (TEKQALQSERNATSKQIGMLKKKG) is disordered. Positions 47–59 (QALQSERNATSKQ) are enriched in polar residues. Position 231–233 (231–233 (TAE)) interacts with L-serine. Residues 262–264 (RRE) and valine 278 contribute to the ATP site. Residue glutamate 285 coordinates L-serine. Residue 349-352 (EVSS) coordinates ATP. Serine 384 lines the L-serine pocket.

Belongs to the class-II aminoacyl-tRNA synthetase family. Type-1 seryl-tRNA synthetase subfamily. As to quaternary structure, homodimer. The tRNA molecule binds across the dimer.

Its subcellular location is the cytoplasm. The catalysed reaction is tRNA(Ser) + L-serine + ATP = L-seryl-tRNA(Ser) + AMP + diphosphate + H(+). It carries out the reaction tRNA(Sec) + L-serine + ATP = L-seryl-tRNA(Sec) + AMP + diphosphate + H(+). Its pathway is aminoacyl-tRNA biosynthesis; selenocysteinyl-tRNA(Sec) biosynthesis; L-seryl-tRNA(Sec) from L-serine and tRNA(Sec): step 1/1. Functionally, catalyzes the attachment of serine to tRNA(Ser). Is also able to aminoacylate tRNA(Sec) with serine, to form the misacylated tRNA L-seryl-tRNA(Sec), which will be further converted into selenocysteinyl-tRNA(Sec). The chain is Serine--tRNA ligase from Akkermansia muciniphila (strain ATCC BAA-835 / DSM 22959 / JCM 33894 / BCRC 81048 / CCUG 64013 / CIP 107961 / Muc).